A 202-amino-acid polypeptide reads, in one-letter code: Solute carrier family 66 member 3 (202 aa).

Residues 1-19 (MEAALLGLCNWSTLGVCAA) form the signal peptide. 4 helical membrane-spanning segments follow: residues 33–53 (SARGLSLPSLLLELAGFLVFL), 64–84 (LTYLEYPILIAQDVILLLCIF), 97–117 (IAVLVSSWFILALQKWIIDLA), and 171–191 (FTILLRFVIMLALNIWVTVTV).

Its subcellular location is the membrane. This Homo sapiens (Human) protein is Solute carrier family 66 member 3.